Here is a 525-residue protein sequence, read N- to C-terminus: GMP synthase [glutamine-hydrolyzing] (525 aa).

Positions 9–207 constitute a Glutamine amidotransferase type-1 domain; sequence RILILDFGSQ…VRDICQCEAL (199 aa). Cys86 functions as the Nucleophile in the catalytic mechanism. Catalysis depends on residues His181 and Glu183. In terms of domain architecture, GMPS ATP-PPase spans 208–400; that stretch reads WTPAKIIDDA…LGLPYDMLYR (193 aa). An ATP-binding site is contributed by 235–241; it reads SGGVDSS.

As to quaternary structure, homodimer.

It catalyses the reaction XMP + L-glutamine + ATP + H2O = GMP + L-glutamate + AMP + diphosphate + 2 H(+). Its pathway is purine metabolism; GMP biosynthesis; GMP from XMP (L-Gln route): step 1/1. Functionally, catalyzes the synthesis of GMP from XMP. The polypeptide is GMP synthase [glutamine-hydrolyzing] (Shigella boydii serotype 4 (strain Sb227)).